A 328-amino-acid polypeptide reads, in one-letter code: Malate dehydrogenase (328 aa).

11-17 (GAAGQIG) lines the NAD(+) pocket. Substrate is bound by residues arginine 94 and arginine 100. Residues asparagine 107, glutamine 114, and 131–133 (VGN) contribute to the NAD(+) site. Substrate contacts are provided by asparagine 133 and arginine 164. Histidine 189 (proton acceptor) is an active-site residue.

This sequence belongs to the LDH/MDH superfamily. MDH type 2 family.

The catalysed reaction is (S)-malate + NAD(+) = oxaloacetate + NADH + H(+). Catalyzes the reversible oxidation of malate to oxaloacetate. This is Malate dehydrogenase from Xanthomonas campestris pv. campestris (strain 8004).